Here is a 492-residue protein sequence, read N- to C-terminus: Cysteine--tRNA ligase (492 aa).

Cysteine 29 contributes to the Zn(2+) binding site. The 'HIGH' region signature appears at 31-41; the sequence is PTVYDYAHIGN. Zn(2+)-binding residues include cysteine 222, histidine 247, and glutamate 251. A 'KMSKS' region motif is present at residues 279-283; sequence KMSKS. Position 282 (lysine 282) interacts with ATP.

It belongs to the class-I aminoacyl-tRNA synthetase family. As to quaternary structure, monomer. Zn(2+) serves as cofactor.

The protein resides in the cytoplasm. It catalyses the reaction tRNA(Cys) + L-cysteine + ATP = L-cysteinyl-tRNA(Cys) + AMP + diphosphate. The chain is Cysteine--tRNA ligase from Treponema denticola (strain ATCC 35405 / DSM 14222 / CIP 103919 / JCM 8153 / KCTC 15104).